The primary structure comprises 283 residues: Homeobox protein Hox-A9a (283 aa).

Disordered stretches follow at residues Val25 to Ser54 and Glu162 to Gly181. A DNA-binding region (homeobox) is located at residues Thr216–Asn275.

Belongs to the Abd-B homeobox family.

The protein resides in the nucleus. Sequence-specific transcription factor which is part of a developmental regulatory system that provides cells with specific positional identities on the anterior-posterior axis. This is Homeobox protein Hox-A9a (hoxa9a) from Takifugu rubripes (Japanese pufferfish).